Consider the following 750-residue polypeptide: Photosystem I P700 chlorophyll a apoprotein A1 (750 aa).

8 helical membrane-spanning segments follow: residues 70-93 (VFSA…FHGA), 156-179 (LYCT…FHYH), 195-219 (LNHH…HVSL), 291-309 (IAHH…GHMY), 346-369 (WHAQ…HHMY), 385-411 (LSLF…IFMV), 433-455 (AIIS…LYIH), and 531-549 (FLVH…LILL). [4Fe-4S] cluster contacts are provided by cysteine 573 and cysteine 582. A run of 2 helical transmembrane segments spans residues 589–610 (HVFL…HFSW) and 664–686 (LSAY…MFLF). Histidine 675 provides a ligand contact to chlorophyll a'. Chlorophyll a contacts are provided by methionine 683 and tyrosine 691. Tryptophan 692 provides a ligand contact to phylloquinone. The helical transmembrane segment at 724 to 744 (AVGVTHYLLGGIATTWAFFLA) threads the bilayer.

Belongs to the PsaA/PsaB family. In terms of assembly, the PsaA/B heterodimer binds the P700 chlorophyll special pair and subsequent electron acceptors. PSI consists of a core antenna complex that captures photons, and an electron transfer chain that converts photonic excitation into a charge separation. The eukaryotic PSI reaction center is composed of at least 11 subunits. P700 is a chlorophyll a/chlorophyll a' dimer, A0 is one or more chlorophyll a, A1 is one or both phylloquinones and FX is a shared 4Fe-4S iron-sulfur center. is required as a cofactor.

It is found in the plastid. The protein localises to the chloroplast thylakoid membrane. The catalysed reaction is reduced [plastocyanin] + hnu + oxidized [2Fe-2S]-[ferredoxin] = oxidized [plastocyanin] + reduced [2Fe-2S]-[ferredoxin]. Its function is as follows. PsaA and PsaB bind P700, the primary electron donor of photosystem I (PSI), as well as the electron acceptors A0, A1 and FX. PSI is a plastocyanin-ferredoxin oxidoreductase, converting photonic excitation into a charge separation, which transfers an electron from the donor P700 chlorophyll pair to the spectroscopically characterized acceptors A0, A1, FX, FA and FB in turn. Oxidized P700 is reduced on the lumenal side of the thylakoid membrane by plastocyanin. The protein is Photosystem I P700 chlorophyll a apoprotein A1 of Aethionema cordifolium (Lebanon stonecress).